A 696-amino-acid polypeptide reads, in one-letter code: DNA-directed RNA polymerase subunit beta' (696 aa).

Cys76, Cys78, Cys94, and Cys97 together coordinate Zn(2+). Mg(2+)-binding residues include Asp496, Asp498, and Asp500.

This sequence belongs to the RNA polymerase beta' chain family. RpoC1 subfamily. In plastids the minimal PEP RNA polymerase catalytic core is composed of four subunits: alpha, beta, beta', and beta''. When a (nuclear-encoded) sigma factor is associated with the core the holoenzyme is formed, which can initiate transcription. It depends on Mg(2+) as a cofactor. The cofactor is Zn(2+).

Its subcellular location is the plastid. The protein localises to the chloroplast. The catalysed reaction is RNA(n) + a ribonucleoside 5'-triphosphate = RNA(n+1) + diphosphate. In terms of biological role, DNA-dependent RNA polymerase catalyzes the transcription of DNA into RNA using the four ribonucleoside triphosphates as substrates. This is DNA-directed RNA polymerase subunit beta' from Guizotia abyssinica (Niger).